A 425-amino-acid chain; its full sequence is Septin-7 (425 aa).

The 270-residue stretch at 28–297 (RGFEFTLMVV…ENYRSRKLAA (270 aa)) folds into the Septin-type G domain. Positions 38-45 (GESGLGKS) are G1 motif. GTP contacts are provided by residues 38 to 45 (GESGLGKS), T71, G97, 176 to 184 (KADTLTPEE), G231, and R246. A G3 motif region spans residues 94 to 97 (DTPG). A G4 motif region spans residues 175–178 (AKAD). A coiled-coil region spans residues 324–421 (LAQMEEERRE…SRTLEKNKKK (98 aa)).

This sequence belongs to the TRAFAC class TrmE-Era-EngA-EngB-Septin-like GTPase superfamily. Septin GTPase family. Monomer, and homodimer. Nucleotide binding promotes oligomerization. Can form heterooligomers with other family members and form filaments.

It is found in the cytoplasm. The protein resides in the chromosome. Its subcellular location is the centromere. It localises to the kinetochore. The protein localises to the cytoskeleton. It is found in the spindle. The protein resides in the cleavage furrow. Its subcellular location is the midbody. It localises to the cilium axoneme. Its function is as follows. Filament-forming cytoskeletal GTPase. Required for normal organization of the actin cytoskeleton. Required for normal progress through mitosis. Involved in cytokinesis. Plays a role in ciliogenesis and collective cell movements including convergent extension during gastrulation. Controls cell elongation but not polarization during convergent extension. The sequence is that of Septin-7 from Xenopus laevis (African clawed frog).